The primary structure comprises 154 residues: Deoxyuridine 5'-triphosphate nucleotidohydrolase (154 aa).

Substrate-binding positions include 64–66, N77, 81–83, and K91; these read RSG and TID.

Belongs to the dUTPase family. Homotrimer. Mg(2+) serves as cofactor.

It catalyses the reaction dUTP + H2O = dUMP + diphosphate + H(+). It functions in the pathway pyrimidine metabolism; dUMP biosynthesis; dUMP from dCTP (dUTP route): step 2/2. In terms of biological role, this enzyme is involved in nucleotide metabolism: it produces dUMP, the immediate precursor of thymidine nucleotides and it decreases the intracellular concentration of dUTP so that uracil cannot be incorporated into DNA. This Mycobacterium avium (strain 104) protein is Deoxyuridine 5'-triphosphate nucleotidohydrolase.